The sequence spans 114 residues: Aspartate 1-decarboxylase (114 aa).

S25 functions as the Schiff-base intermediate with substrate; via pyruvic acid in the catalytic mechanism. A Pyruvic acid (Ser) modification is found at S25. Position 57 (T57) interacts with substrate. Y58 acts as the Proton donor in catalysis. G73–A75 is a binding site for substrate.

This sequence belongs to the PanD family. Heterooctamer of four alpha and four beta subunits. The cofactor is pyruvate. Is synthesized initially as an inactive proenzyme, which is activated by self-cleavage at a specific serine bond to produce a beta-subunit with a hydroxyl group at its C-terminus and an alpha-subunit with a pyruvoyl group at its N-terminus.

It localises to the cytoplasm. It carries out the reaction L-aspartate + H(+) = beta-alanine + CO2. The protein operates within cofactor biosynthesis; (R)-pantothenate biosynthesis; beta-alanine from L-aspartate: step 1/1. Functionally, catalyzes the pyruvoyl-dependent decarboxylation of aspartate to produce beta-alanine. In Thermotoga petrophila (strain ATCC BAA-488 / DSM 13995 / JCM 10881 / RKU-1), this protein is Aspartate 1-decarboxylase.